A 452-amino-acid polypeptide reads, in one-letter code: Phosphoglucosamine mutase (452 aa).

Ser104 (phosphoserine intermediate) is an active-site residue. Mg(2+)-binding residues include Ser104, Asp244, Asp246, and Asp248. Ser104 carries the post-translational modification Phosphoserine.

This sequence belongs to the phosphohexose mutase family. Requires Mg(2+) as cofactor. Post-translationally, activated by phosphorylation.

It carries out the reaction alpha-D-glucosamine 1-phosphate = D-glucosamine 6-phosphate. Functionally, catalyzes the conversion of glucosamine-6-phosphate to glucosamine-1-phosphate. This chain is Phosphoglucosamine mutase, found in Pediococcus pentosaceus (strain ATCC 25745 / CCUG 21536 / LMG 10740 / 183-1w).